We begin with the raw amino-acid sequence, 418 residues long: Gamma-glutamyl phosphate reductase (418 aa).

It belongs to the gamma-glutamyl phosphate reductase family.

It localises to the cytoplasm. It carries out the reaction L-glutamate 5-semialdehyde + phosphate + NADP(+) = L-glutamyl 5-phosphate + NADPH + H(+). The protein operates within amino-acid biosynthesis; L-proline biosynthesis; L-glutamate 5-semialdehyde from L-glutamate: step 2/2. Its function is as follows. Catalyzes the NADPH-dependent reduction of L-glutamate 5-phosphate into L-glutamate 5-semialdehyde and phosphate. The product spontaneously undergoes cyclization to form 1-pyrroline-5-carboxylate. This Pelobacter propionicus (strain DSM 2379 / NBRC 103807 / OttBd1) protein is Gamma-glutamyl phosphate reductase.